We begin with the raw amino-acid sequence, 124 residues long: Snaclec rhodocetin subunit delta (124 aa).

Disulfide bonds link Cys1–Cys12, Cys29–Cys120, and Cys95–Cys112. In terms of domain architecture, C-type lectin spans 8–121; that stretch reads YNGYCYRVFS…CEKTVSFVCK (114 aa).

The protein belongs to the snaclec family. Heterotetramer of subunit alpha, beta, gamma and delta; only the gamma and the delta subunits are disulfide-linked. Alpha-beta heterodimer and gamma-delta heterodimer associate orthogonally, giving a cruciform conformation. This heterotetramer may covalently dimerizes thanks to the gamma subunit. Expressed by the venom gland.

It localises to the secreted. Potent inhibitor of collagen-induced platelet aggregation. It acts by binding to the integrin alpha2A domain and blocks collagen binding to integrin alpha-2/beta-1 (ITGA2/ITGB1). The gamma/delta subunits mainly contribute to this activity. This is Snaclec rhodocetin subunit delta from Calloselasma rhodostoma (Malayan pit viper).